Here is a 431-residue protein sequence, read N- to C-terminus: Glutamate--tRNA ligase 1 (431 aa).

The 'HIGH' region signature appears at 11 to 21 (PSPTGDLHLGG). Residues 203–207 (KLSKR) carry the 'KMSKS' region motif. Position 206 (Lys206) interacts with ATP.

This sequence belongs to the class-I aminoacyl-tRNA synthetase family. Glutamate--tRNA ligase type 1 subfamily. In terms of assembly, monomer.

It is found in the cytoplasm. It catalyses the reaction tRNA(Glu) + L-glutamate + ATP = L-glutamyl-tRNA(Glu) + AMP + diphosphate. Catalyzes the attachment of glutamate to tRNA(Glu) in a two-step reaction: glutamate is first activated by ATP to form Glu-AMP and then transferred to the acceptor end of tRNA(Glu). This Rubrobacter xylanophilus (strain DSM 9941 / JCM 11954 / NBRC 16129 / PRD-1) protein is Glutamate--tRNA ligase 1.